We begin with the raw amino-acid sequence, 636 residues long: Ligand-gated ion channel 4 (636 aa).

The N-terminal stretch at 1-25 (MVICHSCTTFCILLVIDLVPCRIVG) is a signal peptide. The Extracellular segment spans residues 26 to 326 (MENVENRVMF…IHMHRRPLFY (301 aa)). N-linked (GlcNAc...) asparagine glycans are attached at residues Asn-45, Asn-141, Asn-179, and Asn-227. The cysteines at positions 240 and 254 are disulfide-linked. Residue Asn-284 is glycosylated (N-linked (GlcNAc...) asparagine). 3 helical membrane-spanning segments follow: residues 327–347 (VFNHIVPCVLISSMAVLGFLM), 357–377 (MIITTLLSMGVYLQSITESIP), and 383–403 (VPLIGMYYVSSLLMVCLATCV). At 404-602 (NVITLNMHRN…QLASVVDRLL (199 aa)) the chain is on the cytoplasmic side. Residues 603–623 (LCLFCTATLFTIICLLIVPVV) form a helical membrane-spanning segment.

The protein belongs to the ligand-gated ion channel (TC 1.A.9) family.

The protein resides in the postsynaptic cell membrane. Its subcellular location is the cell membrane. In terms of biological role, acetylcholine receptor. In Caenorhabditis briggsae, this protein is Ligand-gated ion channel 4.